A 657-amino-acid polypeptide reads, in one-letter code: Hemocyanin A chain (657 aa).

A disulfide bond links C93 and C98. An N-linked (GlcNAc...) asparagine glycan is attached at N167. The Cu cation site is built by H194, H198, H224, H344, H348, and H384. Intrachain disulfides connect C483-C502 and C562-C609. The segment at 594–616 (EGHNGGHDYGGTHAQCGVHGEAY) is disordered.

The protein belongs to the tyrosinase family. Hemocyanin subfamily. In terms of assembly, hexamer of a number of different chains, of which A, B, and C have been identified. As to expression, hemolymph.

Its subcellular location is the secreted. It localises to the extracellular space. Functionally, hemocyanins are copper-containing oxygen carriers occurring freely dissolved in the hemolymph of many mollusks and arthropods. This is Hemocyanin A chain from Panulirus interruptus (California spiny lobster).